The chain runs to 445 residues: DDB1- and CUL4-associated factor 13 (445 aa).

7 WD repeats span residues 64-104, 107-146, 149-191, 194-234, 236-276, 280-321, and 323-362; these read GHRD…CIRA, AHEG…YGEE, PIHT…PMCS, WGFD…PLKK, ILNM…SPVM, DHVS…EVYH, and KRMQ…KLGV. The required for nucleolar location stretch occupies residues 353–441; the sequence is KANASEKLGV…VVSEKKKHIV (89 aa).

Belongs to the WD repeat DCAF13/WDSOF1 family. As to quaternary structure, part of the small subunit (SSU) processome, composed of more than 70 proteins and the RNA chaperone small nucleolar RNA (snoRNA) U3. Component of the DCX(DCAF13) E3 ubiquitin ligase complex, at least composed of CUL4 (CUL4A or CUL4B), DDB1, DCAF13 and RBX1.

It localises to the nucleus. It is found in the nucleolus. It functions in the pathway protein modification; protein ubiquitination. Part of the small subunit (SSU) processome, first precursor of the small eukaryotic ribosomal subunit. During the assembly of the SSU processome in the nucleolus, many ribosome biogenesis factors, an RNA chaperone and ribosomal proteins associate with the nascent pre-rRNA and work in concert to generate RNA folding, modifications, rearrangements and cleavage as well as targeted degradation of pre-ribosomal RNA by the RNA exosome. In terms of biological role, substrate-recognition component of a DCX (DDB1-CUL4-X-box) E3 ubiquitin-protein ligase complex. This Gallus gallus (Chicken) protein is DDB1- and CUL4-associated factor 13 (DCAF13).